A 109-amino-acid polypeptide reads, in one-letter code: MSDQMPFPFNNFTYFFTLFSKFFSSFHHCTCSLSVSRQYLALDGIYHPLRAAFPNNSTRRKHFTNNWDPRHTGFSPSMTSCSKEHRQGPATKLPSSNYNSDVEDARFQI.

The disordered stretch occupies residues H62 to I109.

The protein resides in the mitochondrion. May be involved in mtDNA stability or mitochondrial gene expression regulation at the post-transcriptional level. This Kluyveromyces lactis (strain ATCC 8585 / CBS 2359 / DSM 70799 / NBRC 1267 / NRRL Y-1140 / WM37) (Yeast) protein is Protein TAR1 (TAR1-A).